We begin with the raw amino-acid sequence, 122 residues long: High-potential iron-sulfur protein (122 aa).

Positions 1–37 (MSDKPISKSRRDAVKVMLGTAAAIPMINLVGFGTARA) are cleaved as a signal peptide. Positions 80, 83, 100, and 114 each coordinate [4Fe-4S] cluster.

This sequence belongs to the high-potential iron-sulfur protein (HiPIP) family. As to quaternary structure, homodimer.

Its subcellular location is the periplasm. Specific class of high-redox-potential 4Fe-4S ferredoxins. Functions in anaerobic electron transport in most purple and in some other photosynthetic bacteria and in at least one genus (Paracoccus) of halophilic, denitrifying bacteria. In Allochromatium vinosum (strain ATCC 17899 / DSM 180 / NBRC 103801 / NCIMB 10441 / D) (Chromatium vinosum), this protein is High-potential iron-sulfur protein (hip).